The sequence spans 416 residues: LL-diaminopimelate aminotransferase (416 aa).

2 residues coordinate substrate: tyrosine 15 and glycine 42. Pyridoxal 5'-phosphate contacts are provided by residues tyrosine 72, 108–109 (SK), tyrosine 132, asparagine 187, tyrosine 218, and 246–248 (SFS). Lysine 109, tyrosine 132, and asparagine 187 together coordinate substrate. Position 249 is an N6-(pyridoxal phosphate)lysine (lysine 249). 2 residues coordinate pyridoxal 5'-phosphate: arginine 257 and asparagine 292. Asparagine 292 and arginine 388 together coordinate substrate.

It belongs to the class-I pyridoxal-phosphate-dependent aminotransferase family. LL-diaminopimelate aminotransferase subfamily. Homodimer. Requires pyridoxal 5'-phosphate as cofactor.

The enzyme catalyses (2S,6S)-2,6-diaminopimelate + 2-oxoglutarate = (S)-2,3,4,5-tetrahydrodipicolinate + L-glutamate + H2O + H(+). The protein operates within amino-acid biosynthesis; L-lysine biosynthesis via DAP pathway; LL-2,6-diaminopimelate from (S)-tetrahydrodipicolinate (aminotransferase route): step 1/1. Involved in the synthesis of meso-diaminopimelate (m-DAP or DL-DAP), required for both lysine and peptidoglycan biosynthesis. Catalyzes the direct conversion of tetrahydrodipicolinate to LL-diaminopimelate. The polypeptide is LL-diaminopimelate aminotransferase (Synechococcus sp. (strain JA-2-3B'a(2-13)) (Cyanobacteria bacterium Yellowstone B-Prime)).